The chain runs to 147 residues: Nucleoside diphosphate kinase (147 aa).

K11, F59, R87, T93, R104, and N114 together coordinate ATP. Catalysis depends on H117, which acts as the Pros-phosphohistidine intermediate.

The protein belongs to the NDK family. Requires Mg(2+) as cofactor.

It localises to the cytoplasm. It catalyses the reaction a 2'-deoxyribonucleoside 5'-diphosphate + ATP = a 2'-deoxyribonucleoside 5'-triphosphate + ADP. The catalysed reaction is a ribonucleoside 5'-diphosphate + ATP = a ribonucleoside 5'-triphosphate + ADP. Its function is as follows. Major role in the synthesis of nucleoside triphosphates other than ATP. The ATP gamma phosphate is transferred to the NDP beta phosphate via a ping-pong mechanism, using a phosphorylated active-site intermediate. The protein is Nucleoside diphosphate kinase of Sulfurisphaera tokodaii (strain DSM 16993 / JCM 10545 / NBRC 100140 / 7) (Sulfolobus tokodaii).